Here is a 56-residue protein sequence, read N- to C-terminus: Sex-specific storage protein 1 (56 aa).

Belongs to the hemocyanin family. Expressed in fat body and ovary.

Its subcellular location is the secreted. Functionally, larval storage protein (LSP) which may serve as a store of amino acids for synthesis of adult proteins. The biosynthesis, accumulation and sequestration of storage protein-1 takes place during metamorphosis and saves energy for the non-feeding pupal stage. May also be essential for egg formation. This chain is Sex-specific storage protein 1, found in Amsacta albistriga (Red hairy caterpillar).